The sequence spans 118 residues: Large ribosomal subunit protein uL24 (118 aa).

This sequence belongs to the universal ribosomal protein uL24 family. In terms of assembly, part of the 50S ribosomal subunit.

Its function is as follows. One of two assembly initiator proteins, it binds directly to the 5'-end of the 23S rRNA, where it nucleates assembly of the 50S subunit. Functionally, one of the proteins that surrounds the polypeptide exit tunnel on the outside of the subunit. This chain is Large ribosomal subunit protein uL24, found in Prochlorococcus marinus (strain NATL1A).